The chain runs to 335 residues: GTPase Obg (335 aa).

Residues 1 to 159 (MKFVDSAKIS…IELEMELKLM (159 aa)) enclose the Obg domain. The OBG-type G domain occupies 160 to 323 (ADVGLVGFPN…LKDELWRQIS (164 aa)). GTP contacts are provided by residues 166-173 (GFPNAGKS), 191-195 (FTTLV), 213-216 (DIPG), 280-283 (TKMD), and 304-306 (SSV). Residues serine 173 and threonine 193 each coordinate Mg(2+).

This sequence belongs to the TRAFAC class OBG-HflX-like GTPase superfamily. OBG GTPase family. As to quaternary structure, monomer. Mg(2+) serves as cofactor.

The protein resides in the cytoplasm. An essential GTPase which binds GTP, GDP and possibly (p)ppGpp with moderate affinity, with high nucleotide exchange rates and a fairly low GTP hydrolysis rate. Plays a role in control of the cell cycle, stress response, ribosome biogenesis and in those bacteria that undergo differentiation, in morphogenesis control. This chain is GTPase Obg, found in Chlorobaculum parvum (strain DSM 263 / NCIMB 8327) (Chlorobium vibrioforme subsp. thiosulfatophilum).